Here is a 367-residue protein sequence, read N- to C-terminus: DNA replication and repair protein RecF (367 aa).

An ATP-binding site is contributed by 31–38 (GENGSGKT).

This sequence belongs to the RecF family.

The protein resides in the cytoplasm. Its function is as follows. The RecF protein is involved in DNA metabolism; it is required for DNA replication and normal SOS inducibility. RecF binds preferentially to single-stranded, linear DNA. It also seems to bind ATP. In Saccharophagus degradans (strain 2-40 / ATCC 43961 / DSM 17024), this protein is DNA replication and repair protein RecF.